A 223-amino-acid polypeptide reads, in one-letter code: ATP phosphoribosyltransferase (223 aa).

It belongs to the ATP phosphoribosyltransferase family. Short subfamily. Heteromultimer composed of HisG and HisZ subunits.

The protein localises to the cytoplasm. It catalyses the reaction 1-(5-phospho-beta-D-ribosyl)-ATP + diphosphate = 5-phospho-alpha-D-ribose 1-diphosphate + ATP. It functions in the pathway amino-acid biosynthesis; L-histidine biosynthesis; L-histidine from 5-phospho-alpha-D-ribose 1-diphosphate: step 1/9. Functionally, catalyzes the condensation of ATP and 5-phosphoribose 1-diphosphate to form N'-(5'-phosphoribosyl)-ATP (PR-ATP). Has a crucial role in the pathway because the rate of histidine biosynthesis seems to be controlled primarily by regulation of HisG enzymatic activity. In Bordetella bronchiseptica (strain ATCC BAA-588 / NCTC 13252 / RB50) (Alcaligenes bronchisepticus), this protein is ATP phosphoribosyltransferase.